We begin with the raw amino-acid sequence, 484 residues long: Aspartyl aminopeptidase (484 aa).

Methionine 1 is modified (N-acetylmethionine). Zn(2+) is bound at residue histidine 84. Position 159 (histidine 159) interacts with substrate. Low complexity predominate over residues 188-206; the sequence is PVESKSTTTTTTTESPKTS. The tract at residues 188–213 is disordered; the sequence is PVESKSTTTTTTTESPKTSDPQDVNS. Position 266 (aspartate 266) interacts with Zn(2+). Residue glutamate 301 coordinates substrate. Glutamate 302 and aspartate 354 together coordinate Zn(2+). Substrate contacts are provided by aspartate 354, histidine 357, lysine 382, and tyrosine 389. Histidine 448 contacts Zn(2+).

This sequence belongs to the peptidase M18 family. Tetrahedron-shaped homododecamer built from six homodimers. It depends on Zn(2+) as a cofactor.

The protein resides in the cytoplasm. The enzyme catalyses Release of an N-terminal aspartate or glutamate from a peptide, with a preference for aspartate.. Likely to play an important role in intracellular protein and peptide metabolism. This is Aspartyl aminopeptidase (dnpep) from Dictyostelium discoideum (Social amoeba).